Here is a 164-residue protein sequence, read N- to C-terminus: MDLTVFFLLIWPPYVANGSAVFASRLKWRHPVDFGRNFIDGRRIFGDGKTYEGVAIGIATGTVLGYFPNLVYHVIGVFDAFVLSASAVLGDLIGAFIKRRLCMPRGHPAFPLDQLDFLLTAFLVYSLFREIPVVYVLAAVVITPVIHRATNYVAYLLKLKKEPW.

Helical transmembrane passes span L3–A23, A55–I75, V77–I97, and F122–I142.

The protein belongs to the CDP-archaeol synthase family. Mg(2+) is required as a cofactor.

The protein localises to the cell membrane. The enzyme catalyses 2,3-bis-O-(geranylgeranyl)-sn-glycerol 1-phosphate + CTP + H(+) = CDP-2,3-bis-O-(geranylgeranyl)-sn-glycerol + diphosphate. It participates in membrane lipid metabolism; glycerophospholipid metabolism. Functionally, catalyzes the formation of CDP-2,3-bis-(O-geranylgeranyl)-sn-glycerol (CDP-archaeol) from 2,3-bis-(O-geranylgeranyl)-sn-glycerol 1-phosphate (DGGGP) and CTP. This reaction is the third ether-bond-formation step in the biosynthesis of archaeal membrane lipids. This Pyrobaculum aerophilum (strain ATCC 51768 / DSM 7523 / JCM 9630 / CIP 104966 / NBRC 100827 / IM2) protein is CDP-archaeol synthase.